A 61-amino-acid chain; its full sequence is Small ribosomal subunit protein bS21 (61 aa).

Residues 40–61 form a disordered region; that stretch reads KPSVKRKKKSEAARKRKNKRRF. The segment covering 43 to 61 has biased composition (basic residues); it reads VKRKKKSEAARKRKNKRRF.

Belongs to the bacterial ribosomal protein bS21 family.

This chain is Small ribosomal subunit protein bS21, found in Ligilactobacillus salivarius (strain UCC118) (Lactobacillus salivarius).